The sequence spans 277 residues: Putative phosphoenolpyruvate synthase regulatory protein (277 aa).

157 to 164 (GVSRSGKT) serves as a coordination point for ADP.

Belongs to the pyruvate, phosphate/water dikinase regulatory protein family. PSRP subfamily.

The catalysed reaction is [pyruvate, water dikinase] + ADP = [pyruvate, water dikinase]-phosphate + AMP + H(+). It carries out the reaction [pyruvate, water dikinase]-phosphate + phosphate + H(+) = [pyruvate, water dikinase] + diphosphate. Its function is as follows. Bifunctional serine/threonine kinase and phosphorylase involved in the regulation of the phosphoenolpyruvate synthase (PEPS) by catalyzing its phosphorylation/dephosphorylation. In Vibrio atlanticus (strain LGP32) (Vibrio splendidus (strain Mel32)), this protein is Putative phosphoenolpyruvate synthase regulatory protein.